A 341-amino-acid chain; its full sequence is Radial spoke head 14 homolog (341 aa).

ARM repeat units follow at residues 16-55, 57-96, 99-138, 139-178, 180-217, 219-258, 260-300, and 302-339; these read PTKAAIAYGCRALSKLNEELQSRDLLTRQKALVALCDLMH, PEYVYEAINIGCLESLKTLLQDDDNLVRIKTTEVLYIMAT, VGRVGFLKHDIIQALSLLLSDHQTLCRENLHQAYKHLAQL, PKGAQGIVQSGLIPSLVRKLQKEEDHIQEIILDTLALCLQ, DATEALESQAVPCLKEKLLSQNSEIRSKAARALIAISI, LDGKNQVWKNKVIPILVTLLSDTDEEVKANAAGALMHATV, TEGK…MLAE, and PEGRKLLLSHVPIFRYLLAHKNEAIQRAAEVAIKVIEW.

Belongs to the flagellar radial spoke RSP14 family. In terms of assembly, component of the axonemal radial spoke complex 1 (RS1), at least composed of spoke head proteins RSPH1, RSPH3, RSPH9 and the cilia-specific component RSPH4A or sperm-specific component RSPH6A, spoke stalk proteins RSPH14, DNAJB13, DYDC1, ROPN1L and NME5, and the anchor protein IQUB.

The protein localises to the cytoplasm. It is found in the cytoskeleton. It localises to the flagellum axoneme. In terms of biological role, functions as part of axonemal radial spoke complexes that play an important part in the motility of sperm and cilia. This Mus musculus (Mouse) protein is Radial spoke head 14 homolog.